We begin with the raw amino-acid sequence, 218 residues long: Ribose-5-phosphate isomerase A (218 aa).

Substrate-binding positions include 28 to 31 (TGST), 81 to 84 (DGAD), and 94 to 97 (KGGG). Catalysis depends on Glu103, which acts as the Proton acceptor. Lys121 serves as a coordination point for substrate.

It belongs to the ribose 5-phosphate isomerase family. In terms of assembly, homodimer.

It carries out the reaction aldehydo-D-ribose 5-phosphate = D-ribulose 5-phosphate. It functions in the pathway carbohydrate degradation; pentose phosphate pathway; D-ribose 5-phosphate from D-ribulose 5-phosphate (non-oxidative stage): step 1/1. Catalyzes the reversible conversion of ribose-5-phosphate to ribulose 5-phosphate. This is Ribose-5-phosphate isomerase A from Colwellia psychrerythraea (strain 34H / ATCC BAA-681) (Vibrio psychroerythus).